A 351-amino-acid polypeptide reads, in one-letter code: Cell shape-determining protein MreB (351 aa).

Residues 20-22 (TAN), 169-171 (GGT), 217-220 (ERIK), and 299-302 (GGAL) each bind ATP.

Belongs to the FtsA/MreB family. Forms polymers.

Its subcellular location is the cytoplasm. In terms of biological role, forms membrane-associated dynamic filaments that are essential for cell shape determination. Acts by regulating cell wall synthesis and cell elongation, and thus cell shape. A feedback loop between cell geometry and MreB localization may maintain elongated cell shape by targeting cell wall growth to regions of negative cell wall curvature. In Pasteurella multocida (strain Pm70), this protein is Cell shape-determining protein MreB.